Here is a 344-residue protein sequence, read N- to C-terminus: L-rhamnose-proton symporter (344 aa).

10 helical membrane-spanning segments follow: residues 4-24, 38-58, 68-88, 101-121, 131-151, 175-195, 214-234, 259-279, 290-310, and 321-341; these read AITMGIFWHLIGAASAACFYA, WSVGGIVSWLILPWTISALLL, FNLSTLLPVFLFGAMWGIGNI, MGIGIAIGITLIVGTLMTPII, TEGGHMTLLGVFVALIGVGIV, LLLAVMCGIFSAGMSFAMNAA, LPSYVVIMGGGALVNLGFCFI, ILLSALGGLMWYLQFFFYAWG, MSWMLHMSFYVLCGGLVGLVL, and VAVLSLGCVVIIIAANIVGLG.

The protein belongs to the L-rhamnose transporter (TC 2.A.7.6) family.

Its subcellular location is the cell inner membrane. It carries out the reaction L-rhamnopyranose(in) + H(+)(in) = L-rhamnopyranose(out) + H(+)(out). In terms of biological role, uptake of L-rhamnose across the cytoplasmic membrane with the concomitant transport of protons into the cell (symport system). In Salmonella typhi, this protein is L-rhamnose-proton symporter.